We begin with the raw amino-acid sequence, 407 residues long: Probable NADPH dehydrogenase (407 aa).

Residues Thr-49 and Gln-124 each contribute to the FMN site. Tyr-206 serves as the catalytic Proton donor. 2 residues coordinate FMN: Arg-254 and Arg-357.

Belongs to the NADH:flavin oxidoreductase/NADH oxidase family. The cofactor is FMN.

The enzyme catalyses A + NADPH + H(+) = AH2 + NADP(+). In terms of biological role, oxidoreductase that binds mammalian estrogens with high affinity. This chain is Probable NADPH dehydrogenase, found in Candida albicans (strain SC5314 / ATCC MYA-2876) (Yeast).